Here is a 588-residue protein sequence, read N- to C-terminus: Methylcrotonoyl-CoA carboxylase beta chain, mitochondrial (588 aa).

The region spanning 72 to 329 (MNSTLKQLKE…KKQPSPVITE (258 aa)) is the CoA carboxyltransferase N-terminal domain. The carboxyltransferase stretch occupies residues 72–570 (MNSTLKQLKE…RKVIALSLSA (499 aa)). Residues 329-570 (ETEEPLYPTS…RKVIALSLSA (242 aa)) enclose the CoA carboxyltransferase C-terminal domain. Residues 366–395 (RFDEFKELYGTTLICGFARVHGMPVGIIAN) form an acyl-CoA binding region.

The protein belongs to the AccD/PCCB family. As to quaternary structure, probably a dodecamer composed of six biotin-containing alpha subunits and six beta subunits.

The protein localises to the mitochondrion matrix. It carries out the reaction 3-methylbut-2-enoyl-CoA + hydrogencarbonate + ATP = 3-methyl-(2E)-glutaconyl-CoA + ADP + phosphate + H(+). Its pathway is amino-acid degradation; L-leucine degradation; (S)-3-hydroxy-3-methylglutaryl-CoA from 3-isovaleryl-CoA: step 2/3. Functionally, carboxyltransferase subunit of the 3-methylcrotonyl-CoA carboxylase, an enzyme that catalyzes the conversion of 3-methylcrotonyl-CoA to 3-methylglutaconyl-CoA, a critical step for leucine and isovaleric acid catabolism. The chain is Methylcrotonoyl-CoA carboxylase beta chain, mitochondrial (mccb) from Dictyostelium discoideum (Social amoeba).